We begin with the raw amino-acid sequence, 283 residues long: uncharacterized protein (283 aa).

Transmembrane regions (helical) follow at residues 18–38, 61–81, and 94–114; these read VYDI…AKLI, VIYF…LGLD, and IVLG…IFLI.

Belongs to the MscS (TC 1.A.23) family.

The protein resides in the cell membrane. This is an uncharacterized protein from Archaeoglobus fulgidus (strain ATCC 49558 / DSM 4304 / JCM 9628 / NBRC 100126 / VC-16).